Reading from the N-terminus, the 79-residue chain is Antimicrobial peptide ToAP2 (79 aa).

A signal peptide spans 1–23; the sequence is MQFKKQLLVIFFAYFLVVNESEA. Positions 50–79 are excised as a propeptide; the sequence is SLMKRELKNLYDPYQRSVEMERLLKELPLY.

The protein belongs to the non-disulfide-bridged peptide (NDBP) superfamily. Medium-length antimicrobial peptide (group 3) family. Expressed by the venom gland.

The protein localises to the secreted. Its subcellular location is the target cell membrane. Its function is as follows. Antimicrobial peptide. Shows antibacterial activity against all M.massiliense bacterial strains tested. Has antifungal activity against Candida spp. and two Cryptococcus neoformans strains with MICs values ranging from 6.25 to 200 uM. Also shows an inhibitory activity on C.albicans biofilms at high concentrations. Exhibits chemotactic activity for monocytes, neutrophils, and eosinophils. Shows low cytotoxic activity and has weak hemolytic activity on human erythrocytes. In vivo, treatment of infected mice with M.massiliense reduces the bacterial load in the liver, lung, and spleen. May act by disrupting the integrity of the bacterial cell membrane. The polypeptide is Antimicrobial peptide ToAP2 (Tityus obscurus (Amazonian scorpion)).